The sequence spans 877 residues: Clumping factor B (877 aa).

Residues 1 to 44 (MKKRIDYLSNKQNKYSIRRFTVGTTSVIVGATILFGIGNHQAQA) form the signal peptide. Positions 15–26 (YSIRRFTVGTTS) match the YSIRK-G/S signaling motif motif. 2 stretches are compositionally biased toward polar residues: residues 44 to 61 (ASEQSNDTTQSSKNNASA) and 68 to 95 (MIETPQLNTTANDTSDISANTNSANVDS). The disordered stretch occupies residues 44–192 (ASEQSNDTTQ…QGTSKPSVRT (149 aa)). Residues 45-542 (SEQSNDTTQS…GSADGDSAVN (498 aa)) form a ligand binding A region region. Residues 96 to 119 (TTKPMSTQTSNTTTTEPASTNETP) show a composition bias toward low complexity. A compositionally biased stretch (polar residues) spans 120-189 (QPTAIKNQAT…SNAQGTSKPS (70 aa)). An MIDAS-like motif motif is present at residues 272–276 (DYSNS). The segment at 530–849 (YGGGSADGDS…ETGDKSENTN (320 aa)) is disordered. Over residues 545 to 555 (DPTPGPPVDPE) the composition is skewed to pro residues. The segment covering 556 to 801 (PSPDPEPEPT…SDSDSDSDSD (246 aa)) has biased composition (acidic residues). Polar residues predominate over residues 805–816 (RVTPPNNEQKAP). Residues 833–846 (HKTDALPETGDKSE) are compositionally biased toward basic and acidic residues. The LPXTG sorting signal signature appears at 838–842 (LPETG). Residue threonine 841 is modified to Pentaglycyl murein peptidoglycan amidated threonine. Residues 842–877 (GDKSENTNATLFGAMMALLGSLLLFRKRKQDHKEKA) constitute a propeptide, removed by sortase.

It belongs to the serine-aspartate repeat-containing protein (SDr) family. In terms of processing, proteolytically cleaved by aureolysin (aur). This cleavage leads to the inactivation of ClfB.

It is found in the secreted. It localises to the cell wall. Functionally, cell surface-associated protein implicated in virulence by promoting bacterial attachment to both alpha- and beta-chains of human fibrinogen and inducing the formation of bacterial clumps. Partly responsible for mediating bacterial attachment to the highly keratinized squamous epithelial cells from the nasal cavity via an interaction with cytokeratin K10 (K10). Also promotes bacterial attachment to cultured keratinocytes, possibly through an interaction with cytokeratin K10. Binds mouse cytokeratin K10. Activates human platelet aggregation. This Staphylococcus aureus (strain NCTC 8325 / PS 47) protein is Clumping factor B (clfB).